A 516-amino-acid chain; its full sequence is MSSKVIIFDTTLRDGEQALQASLSVKEKLQIALSLEKCGIDIIEVGFPISSPGDFKSVQTISKKIKNSRICSLARCVEKDIEVAGDAMSSSDFFRIHIFLATSTLHMESKLRKNFDEIIDMAVSSVKKALRYTDDVEFSCEDASRTTMDNLCRIVEKLIKAGVKTINIPDTVGYTIPNELSNIIKNLFERVPNIHKSIISVHCHNDLGMAVGNSISAIQAGARQIEGTINGIGERAGNTALEEIIMAIKVREDILGVSTNIVHKEIYRTSQIISQICNMPIPANKAIVGSNAFAHSSGIHQDGVLKNRKNYEIMEPNTIGVKEVKLNLTSRSGRAAVKYYMDKMGYKDDDYDIDELYSAFLKLADKKGQVFDYDLEALAIFSKKQENAEYFYLKFFSVQSISNGLSTASVKLKCGKKVYTESSTTSNGPVDATYQALNKIINFPITLQKFQLVAKGKGKDALGQVDILVKYENRQFHGIGLATDIIESSAQAMINVLNNIWKSQQVNKKLKNLKKY.

In terms of domain architecture, Pyruvate carboxyltransferase spans 5 to 267; that stretch reads VIIFDTTLRD…STNIVHKEIY (263 aa). Mn(2+) is bound by residues D14, H202, H204, and N238. The tract at residues 392-516 is regulatory domain; that stretch reads YLKFFSVQSI…NKKLKNLKKY (125 aa).

The protein belongs to the alpha-IPM synthase/homocitrate synthase family. LeuA type 1 subfamily. In terms of assembly, homodimer. Requires Mn(2+) as cofactor.

The protein localises to the cytoplasm. It carries out the reaction 3-methyl-2-oxobutanoate + acetyl-CoA + H2O = (2S)-2-isopropylmalate + CoA + H(+). The protein operates within amino-acid biosynthesis; L-leucine biosynthesis; L-leucine from 3-methyl-2-oxobutanoate: step 1/4. Catalyzes the condensation of the acetyl group of acetyl-CoA with 3-methyl-2-oxobutanoate (2-ketoisovalerate) to form 3-carboxy-3-hydroxy-4-methylpentanoate (2-isopropylmalate). This Buchnera aphidicola subsp. Diuraphis noxia protein is 2-isopropylmalate synthase.